Reading from the N-terminus, the 544-residue chain is NADP-dependent malic enzyme (544 aa).

The disordered stretch occupies residues 1-22 (MQNKPSFILRNPSANKGTGFNN). A compositionally biased stretch (polar residues) spans 12-21 (PSANKGTGFN). Tyr-92 serves as the catalytic Proton donor. Residue Arg-145 coordinates NAD(+). Lys-163 (proton acceptor) is an active-site residue. A divalent metal cation is bound by residues Glu-234, Asp-235, and Asp-258. Position 258 (Asp-258) interacts with NAD(+). An NADP(+)-binding site is contributed by 287–303 (VFLGAGSAGIGVADCIM). NAD(+) is bound at residue Asn-400.

Belongs to the malic enzymes family. Homotetramer. Requires Mg(2+) as cofactor. Mn(2+) serves as cofactor. Expressed in the fruiting body.

The protein resides in the cytoplasm. The enzyme catalyses (S)-malate + NADP(+) = pyruvate + CO2 + NADPH. The catalysed reaction is oxaloacetate + H(+) = pyruvate + CO2. The polypeptide is NADP-dependent malic enzyme (malA) (Dictyostelium discoideum (Social amoeba)).